A 666-amino-acid chain; its full sequence is ATP-dependent zinc metalloprotease FtsH (666 aa).

Residues 1 to 23 form a disordered region; it reads MSREVTSGLPQDKPTGSAPPPPP. At 1 to 27 the chain is on the cytoplasmic side; it reads MSREVTSGLPQDKPTGSAPPPPPPWRR. The chain crosses the membrane as a helical span at residues 28–48; that stretch reads WLLPIGLLVSLVLLFTFPMRP. The Extracellular portion of the chain corresponds to 49–125; that stretch reads SSGKTLTYSE…RPPGPSLASQ (77 aa). A helical transmembrane segment spans residues 126-146; the sequence is VLAGVLSFLPFLLLLGLFAYS. Over 147 to 666 the chain is Cytoplasmic; that stretch reads GRRAGAGFLA…RTAASSDDLL (520 aa). 219 to 226 is an ATP binding site; the sequence is GPPGTGKT. Position 442 (histidine 442) interacts with Zn(2+). Residue glutamate 443 is part of the active site. 2 residues coordinate Zn(2+): histidine 446 and aspartate 518. The segment at 626 to 666 is disordered; sequence PEEHREAAARHVRRPGIAAATGASMAGGSEPRTAASSDDLL. A compositionally biased stretch (low complexity) spans 641–653; that stretch reads GIAAATGASMAGG.

The protein in the central section; belongs to the AAA ATPase family. This sequence in the C-terminal section; belongs to the peptidase M41 family. As to quaternary structure, homohexamer. The cofactor is Zn(2+).

It is found in the cell membrane. In terms of biological role, acts as a processive, ATP-dependent zinc metallopeptidase for both cytoplasmic and membrane proteins. Plays a role in the quality control of integral membrane proteins. The polypeptide is ATP-dependent zinc metalloprotease FtsH (Acidothermus cellulolyticus (strain ATCC 43068 / DSM 8971 / 11B)).